The following is a 225-amino-acid chain: Ribonuclease 3 (225 aa).

In terms of domain architecture, RNase III spans 5 to 127 (IDKLERKLGY…IIGAIYLDSD (123 aa)). Mg(2+) is bound at residue glutamate 40. Aspartate 44 is a catalytic residue. Residues aspartate 113 and glutamate 116 each contribute to the Mg(2+) site. The active site involves glutamate 116. A DRBM domain is found at 154-224 (DPKTRLQEFL…AETALEQLTN (71 aa)). The segment at 204–225 (GTSRRKAEQAAAETALEQLTNG) is disordered. Positions 212-225 (QAAAETALEQLTNG) are enriched in low complexity.

It belongs to the ribonuclease III family. As to quaternary structure, homodimer. The cofactor is Mg(2+).

It localises to the cytoplasm. It catalyses the reaction Endonucleolytic cleavage to 5'-phosphomonoester.. Functionally, digests double-stranded RNA. Involved in the processing of primary rRNA transcript to yield the immediate precursors to the large and small rRNAs (23S and 16S). Processes some mRNAs, and tRNAs when they are encoded in the rRNA operon. Processes pre-crRNA and tracrRNA of type II CRISPR loci if present in the organism. The sequence is that of Ribonuclease 3 from Vibrio parahaemolyticus serotype O3:K6 (strain RIMD 2210633).